The following is a 294-amino-acid chain: HTH-type transcriptional regulator TcbR (294 aa).

One can recognise an HTH lysR-type domain in the interval Met1 to Thr58. The segment at residues Met18–Gln37 is a DNA-binding region (H-T-H motif).

This sequence belongs to the LysR transcriptional regulatory family.

Its function is as follows. Involved in regulation of chlorinated catechol metabolism. Transcriptional activator of the tcbCDEF chlorocatechol oxidative operon. May bind 2-chloromuconate as an inducer. The polypeptide is HTH-type transcriptional regulator TcbR (tcbR) (Pseudomonas sp. (strain P51)).